A 430-amino-acid chain; its full sequence is Sesquiterpene synthase 15 (430 aa).

Residues Asp-182, Asp-186, and Glu-335 each coordinate Mg(2+). Positions 182 to 186 (DDIYD) match the DDXXD motif motif.

The protein belongs to the terpene synthase family. Tpsa subfamily. It depends on Mg(2+) as a cofactor. Mn(2+) is required as a cofactor.

The protein operates within secondary metabolite biosynthesis; terpenoid biosynthesis. Functionally, sesquiterpene synthase involved in the biosynthesis of volatile compounds. No activity detected with geranyl diphosphate (GPP) and farnesyl diphosphate (FPP) as substrates. The protein is Sesquiterpene synthase 15 of Solanum lycopersicum (Tomato).